Here is an 855-residue protein sequence, read N- to C-terminus: Potassium transporter 13 (855 aa).

A disordered region spans residues 1-67 (MFHVEEESSG…EMDSDEEDDN (67 aa)). Topologically, residues 1–105 (MFHVEEESSG…EIEDTGIGKK (105 aa)) are cytoplasmic. Residues 36–51 (EKDDYEVNEDYDDDGY) are compositionally biased toward acidic residues. Residues 106 to 126 (LILALQTLGVVFGDIGTSPLY) form a helical membrane-spanning segment. Over 127-142 (TFTVMFRRSPINDKED) the chain is Extracellular. A helical transmembrane segment spans residues 143–163 (IIGALSLVIYTLILIPLVKYV). Over 164–233 (HFVLWANDDG…RLEASMALKK (70 aa)) the chain is Cytoplasmic. A helical membrane pass occupies residues 234–254 (LLLILVLAGTAMVIADAVVTP). The Extracellular portion of the chain corresponds to 255-268 (AMSVMSAIGGLKVG). Residues 269-289 (VGVIEQDQVVVISVSFLVILF) traverse the membrane as a helical segment. Residues 290 to 298 (SVQKYGTSK) are Cytoplasmic-facing. A helical membrane pass occupies residues 299–319 (LGLVLGPALLLWFFCLAGIGI). Topologically, residues 320–346 (YNLVKYDSSVFKAFNPAYIYFFFKRNS) are extracellular. Residues 347–367 (VNAWYALGGCVLCATGSEAMF) traverse the membrane as a helical segment. At 368–379 (ADLSYFSVHSIQ) the chain is on the cytoplasmic side. The chain crosses the membrane as a helical span at residues 380–400 (LTFILLVLPCLLLGYLGQAAY). At 401–415 (LSENFSAAGDAFFSS) the chain is on the extracellular side. N-linked (GlcNAc...) asparagine glycosylation occurs at N404. Residues 416–436 (VPSSLFWPVFLISNVAALIAS) form a helical membrane-spanning segment. Residues 437-467 (RAMTTATFTCIKQSIALGCFPRLKIIHTSKK) lie on the Cytoplasmic side of the membrane. The chain crosses the membrane as a helical span at residues 468 to 488 (FIGQIYIPVLNWSLLVVCLIV). The Extracellular segment spans residues 489–503 (VCSTSNIFAIGNAYG). The helical transmembrane segment at 504–524 (IAELGIMMTTTILVTLIMLLI) threads the bilayer. Residues 525 to 528 (WQTN) are Cytoplasmic-facing. A helical membrane pass occupies residues 529–549 (IIVVSMFAIVSLIVELVFFSS). The Extracellular portion of the chain corresponds to 550-553 (VCSS). Residues 554 to 574 (VADGSWIILVFATIMFLIMFV) form a helical membrane-spanning segment. Over 575–855 (WNYGSKLKYE…LMQVGMTYMV (281 aa)) the chain is Cytoplasmic. Residue S766 is modified to Phosphoserine.

Belongs to the HAK/KUP transporter (TC 2.A.72.3) family.

The protein resides in the cell membrane. Functionally, probable potassium transporter. The chain is Potassium transporter 13 (POT13) from Arabidopsis thaliana (Mouse-ear cress).